Reading from the N-terminus, the 179-residue chain is Large ribosomal subunit protein uL5 (179 aa).

The protein belongs to the universal ribosomal protein uL5 family. As to quaternary structure, part of the 50S ribosomal subunit; part of the 5S rRNA/L5/L18/L25 subcomplex. Contacts the 5S rRNA and the P site tRNA. Forms a bridge to the 30S subunit in the 70S ribosome.

This is one of the proteins that bind and probably mediate the attachment of the 5S RNA into the large ribosomal subunit, where it forms part of the central protuberance. In the 70S ribosome it contacts protein S13 of the 30S subunit (bridge B1b), connecting the 2 subunits; this bridge is implicated in subunit movement. Contacts the P site tRNA; the 5S rRNA and some of its associated proteins might help stabilize positioning of ribosome-bound tRNAs. The protein is Large ribosomal subunit protein uL5 of Francisella tularensis subsp. novicida (strain U112).